The primary structure comprises 201 residues: UPF0637 protein LSEI_1198 (201 aa).

The protein belongs to the UPF0637 family.

The polypeptide is UPF0637 protein LSEI_1198 (Lacticaseibacillus paracasei (strain ATCC 334 / BCRC 17002 / CCUG 31169 / CIP 107868 / KCTC 3260 / NRRL B-441) (Lactobacillus paracasei)).